The sequence spans 405 residues: S-adenosylmethionine synthase (405 aa).

Position 22 (His-22) interacts with ATP. Position 24 (Asp-24) interacts with Mg(2+). Glu-50 lines the K(+) pocket. Residues Glu-63 and Gln-107 each coordinate L-methionine. The segment at 107-117 (QSPDIAQGVNR) is flexible loop. ATP is bound by residues 184–186 (DGK), 250–251 (RF), Asp-259, 265–266 (RK), Ala-282, and Lys-286. Asp-259 contributes to the L-methionine binding site. Lys-290 lines the L-methionine pocket.

The protein belongs to the AdoMet synthase family. As to quaternary structure, homotetramer; dimer of dimers. Mg(2+) serves as cofactor. It depends on K(+) as a cofactor.

It is found in the cytoplasm. The catalysed reaction is L-methionine + ATP + H2O = S-adenosyl-L-methionine + phosphate + diphosphate. Its pathway is amino-acid biosynthesis; S-adenosyl-L-methionine biosynthesis; S-adenosyl-L-methionine from L-methionine: step 1/1. Its function is as follows. Catalyzes the formation of S-adenosylmethionine (AdoMet) from methionine and ATP. The overall synthetic reaction is composed of two sequential steps, AdoMet formation and the subsequent tripolyphosphate hydrolysis which occurs prior to release of AdoMet from the enzyme. This chain is S-adenosylmethionine synthase, found in Roseiflexus castenholzii (strain DSM 13941 / HLO8).